Reading from the N-terminus, the 296-residue chain is Phosphatidylglycerol--prolipoprotein diacylglyceryl transferase (296 aa).

Transmembrane regions (helical) follow at residues 10–30 (IAFSLGPVKVHWYGLMYLAAF), 57–77 (LLFYGMLGVVLGGRIGYMLFY), 92–112 (VWEGGMSFHGGLLGVLVACWL), and 119–139 (LHFFDVMDFVAPLVPLGLGFG). Residue Arg140 coordinates a 1,2-diacyl-sn-glycero-3-phospho-(1'-sn-glycerol). 3 consecutive transmembrane segments (helical) span residues 194–214 (QLYEAALEGVVMFVVLWTFSM), 220–240 (YALSGLFALLYGVFRFIVEFV), and 254–274 (WLTMGQILSLPLIAVGLALLA).

It belongs to the Lgt family.

The protein resides in the cell inner membrane. It carries out the reaction L-cysteinyl-[prolipoprotein] + a 1,2-diacyl-sn-glycero-3-phospho-(1'-sn-glycerol) = an S-1,2-diacyl-sn-glyceryl-L-cysteinyl-[prolipoprotein] + sn-glycerol 1-phosphate + H(+). The protein operates within protein modification; lipoprotein biosynthesis (diacylglyceryl transfer). Catalyzes the transfer of the diacylglyceryl group from phosphatidylglycerol to the sulfhydryl group of the N-terminal cysteine of a prolipoprotein, the first step in the formation of mature lipoproteins. The protein is Phosphatidylglycerol--prolipoprotein diacylglyceryl transferase of Xanthomonas oryzae pv. oryzae (strain MAFF 311018).